A 501-amino-acid chain; its full sequence is Lysine--tRNA ligase (501 aa).

The Mg(2+) site is built by Glu-411 and Glu-418.

Belongs to the class-II aminoacyl-tRNA synthetase family. As to quaternary structure, homodimer. The cofactor is Mg(2+).

Its subcellular location is the cytoplasm. It catalyses the reaction tRNA(Lys) + L-lysine + ATP = L-lysyl-tRNA(Lys) + AMP + diphosphate. The polypeptide is Lysine--tRNA ligase (Clostridium perfringens (strain 13 / Type A)).